An 86-amino-acid chain; its full sequence is Centromere protein W (86 aa).

The protein belongs to the CENP-W/WIP1 family. As to quaternary structure, heterodimer with CENPT; this dimer coassembles with CENPS-CENPX heterodimers at centromeres to form the tetrameric CENP-T-W-S-X complex, which is a subcomplex of the large constitutive centromere-associated network (CCAN, also known as the interphase centromere complex or ICEN). Interacts with NPM1.

The protein localises to the nucleus. Its subcellular location is the chromosome. The protein resides in the centromere. It is found in the kinetochore. It localises to the nucleus matrix. The protein localises to the nucleolus. In terms of biological role, component of the CENPA-NAC (nucleosome-associated) complex, a complex that plays a central role in assembly of kinetochore proteins, mitotic progression and chromosome segregation. The CENPA-NAC complex recruits the CENPA-CAD (nucleosome distal) complex and may be involved in incorporation of newly synthesized CENPA into centromeres. Part of a nucleosome-associated complex that binds specifically to histone H3-containing nucleosomes at the centromere, as opposed to nucleosomes containing CENPA. Component of the heterotetrameric CENP-T-W-S-X complex that binds and supercoils DNA, and plays an important role in kinetochore assembly. CENPW has a fundamental role in kinetochore assembly and function. It is one of the inner kinetochore proteins, with most further proteins binding downstream. Required for normal chromosome organization and normal progress through mitosis. This Rattus norvegicus (Rat) protein is Centromere protein W (Cenpw).